The sequence spans 299 residues: Methionine aminopeptidase (299 aa).

Residue H64 participates in substrate binding. A divalent metal cation is bound by residues D84, D95, and H158. Residue H166 participates in substrate binding. A divalent metal cation-binding residues include E191 and E284.

Belongs to the peptidase M24A family. Methionine aminopeptidase archaeal type 2 subfamily. Monomer. It depends on Co(2+) as a cofactor. Requires Zn(2+) as cofactor. Mn(2+) is required as a cofactor. Fe(2+) serves as cofactor.

It carries out the reaction Release of N-terminal amino acids, preferentially methionine, from peptides and arylamides.. In terms of biological role, removes the N-terminal methionine from nascent proteins. The N-terminal methionine is often cleaved when the second residue in the primary sequence is small and uncharged (Met-Ala-, Cys, Gly, Pro, Ser, Thr, or Val). In Methanothermobacter thermautotrophicus (strain ATCC 29096 / DSM 1053 / JCM 10044 / NBRC 100330 / Delta H) (Methanobacterium thermoautotrophicum), this protein is Methionine aminopeptidase.